The following is a 392-amino-acid chain: Succinate--CoA ligase [ADP-forming] subunit beta (392 aa).

Residues 9 to 244 (KALLAQYGVG…LSEEESSEIE (236 aa)) form the ATP-grasp domain. ATP contacts are provided by residues Lys46, 53-55 (GRG), Glu99, Leu102, and Glu107. Mg(2+)-binding residues include Asn199 and Asp213. Residues Asn264 and 321-323 (GIV) each bind substrate.

This sequence belongs to the succinate/malate CoA ligase beta subunit family. Heterotetramer of two alpha and two beta subunits. Mg(2+) is required as a cofactor.

It catalyses the reaction succinate + ATP + CoA = succinyl-CoA + ADP + phosphate. The enzyme catalyses GTP + succinate + CoA = succinyl-CoA + GDP + phosphate. It participates in carbohydrate metabolism; tricarboxylic acid cycle; succinate from succinyl-CoA (ligase route): step 1/1. Functionally, succinyl-CoA synthetase functions in the citric acid cycle (TCA), coupling the hydrolysis of succinyl-CoA to the synthesis of either ATP or GTP and thus represents the only step of substrate-level phosphorylation in the TCA. The beta subunit provides nucleotide specificity of the enzyme and binds the substrate succinate, while the binding sites for coenzyme A and phosphate are found in the alpha subunit. The polypeptide is Succinate--CoA ligase [ADP-forming] subunit beta (Wolinella succinogenes (strain ATCC 29543 / DSM 1740 / CCUG 13145 / JCM 31913 / LMG 7466 / NCTC 11488 / FDC 602W) (Vibrio succinogenes)).